The chain runs to 215 residues: DNA repair and recombination protein RadB (215 aa).

Belongs to the eukaryotic RecA-like protein family. RadB subfamily.

Functionally, involved in DNA repair and in homologous recombination. May regulate the cleavage reactions of the branch-structured DNA. Has a very weak ATPase activity that is not stimulated by DNA. Binds DNA but does not promote DNA strands exchange. The sequence is that of DNA repair and recombination protein RadB from Methanococcus maripaludis (strain C7 / ATCC BAA-1331).